The primary structure comprises 328 residues: CMP-N-acetylneuraminate-beta-galactosamide-alpha-2,3-sialyltransferase 4 (328 aa).

The Cytoplasmic portion of the chain corresponds to 1 to 7 (MCPAGWK). The chain crosses the membrane as a helical; Signal-anchor for type II membrane protein span at residues 8–25 (LLAMLALVLVVMVWYSIS). The Lumenal portion of the chain corresponds to 26-328 (REDSFYFPIP…MGAVKNLTSF (303 aa)). 4 N-linked (GlcNAc...) asparagine glycosylation sites follow: asparagine 56, asparagine 126, asparagine 305, and asparagine 324. An intrachain disulfide couples cysteine 115 to cysteine 268.

The protein belongs to the glycosyltransferase 29 family. Post-translationally, the soluble form derives from the membrane form by proteolytic processing.

It is found in the golgi apparatus. The protein localises to the golgi stack membrane. Its subcellular location is the secreted. It catalyses the reaction a beta-D-galactosyl-(1-&gt;3)-N-acetyl-beta-D-galactosaminyl derivative + CMP-N-acetyl-beta-neuraminate = an N-acetyl-alpha-neuraminyl-(2-&gt;3)-beta-D-galactosyl-(1-&gt;3)-N-acetyl-beta-D-galactosaminyl derivative + CMP + H(+). It carries out the reaction a beta-D-galactosyl-(1-&gt;3)-N-acetyl-alpha-D-galactosaminyl derivative + CMP-N-acetyl-beta-neuraminate = an N-acetyl-alpha-neuraminyl-(2-&gt;3)-beta-D-galactosyl-(1-&gt;3)-N-acetyl-alpha-D-galactosaminyl derivative + CMP + H(+). The catalysed reaction is a beta-D-galactosyl-(1-&gt;4)-N-acetyl-beta-D-glucosaminyl derivative + CMP-N-acetyl-beta-neuraminate = an N-acetyl-alpha-neuraminyl-(2-&gt;3)-beta-D-galactosyl-(1-&gt;4)-N-acetyl-beta-D-glucosaminyl derivative + CMP + H(+). The enzyme catalyses a ganglioside GM1 (d18:1(4E)) + CMP-N-acetyl-beta-neuraminate = a ganglioside GD1a (d18:1(4E)) + CMP + H(+). It catalyses the reaction a ganglioside GA1 (d18:1(4E)) + CMP-N-acetyl-beta-neuraminate = a ganglioside GM1b (d18:1(4E)) + CMP + H(+). It carries out the reaction a ganglioside GT1c (d18:1(4E)) + CMP-N-acetyl-beta-neuraminate = a ganglioside GQ1c (d18:1(4E)) + CMP + H(+). The catalysed reaction is a neolactoside nLc4Cer + CMP-N-acetyl-beta-neuraminate = a neolactoside IV(3)-alpha-NeuAc-nLc4Cer + CMP + H(+). The enzyme catalyses a neolactoside nLc4Cer(d18:1(4E)) + CMP-N-acetyl-beta-neuraminate = a neolactoside IV(3)-alpha-NeuAc-nLc4Cer(d18:1(4E)) + CMP + H(+). The protein operates within protein modification; protein glycosylation. It participates in glycolipid biosynthesis. A beta-galactoside alpha2-3 sialyltransferase involved in terminal sialylation of glycoproteins and glycolipids. Catalyzes the transfer of sialic acid (N-acetyl-neuraminic acid; Neu5Ac) from the nucleotide sugar donor CMP-Neu5Ac onto acceptor Galbeta-(1-&gt;3)-GalNAc- and Galbeta-(1-&gt;4)-GlcNAc-terminated glycoconjugates through an alpha2-3 linkage. Plays a major role in hemostasis. Responsible for sialylation of plasma VWF/von Willebrand factor, preventing its recognition by asialoglycoprotein receptors (ASGPR) and subsequent clearance. Regulates ASGPR-mediated clearance of platelets. Participates in the biosynthesis of the sialyl Lewis X epitopes, both on O- and N-glycans, which are recognized by SELE/E-selectin, SELP/P-selectin and SELL/L-selectin. Essential for selectin-mediated rolling and adhesion of leukocytes during extravasation. Contributes to adhesion and transendothelial migration of neutrophils likely through terminal sialylation of CXCR2. In glycosphingolipid biosynthesis, sialylates GM1 and GA1 gangliosides to form GD1a and GM1b, respectively. Metabolizes brain c-series ganglioside GT1c forming GQ1c. Synthesizes ganglioside LM1 (IV3Neu5Ac-nLc4Cer), a major structural component of peripheral nerve myelin. In Pan troglodytes (Chimpanzee), this protein is CMP-N-acetylneuraminate-beta-galactosamide-alpha-2,3-sialyltransferase 4 (ST3GAL4).